A 134-amino-acid chain; its full sequence is ATP synthase epsilon chain (134 aa).

Belongs to the ATPase epsilon chain family. F-type ATPases have 2 components, CF(1) - the catalytic core - and CF(0) - the membrane proton channel. CF(1) has five subunits: alpha(3), beta(3), gamma(1), delta(1), epsilon(1). CF(0) has three main subunits: a, b and c.

It is found in the cell membrane. Functionally, produces ATP from ADP in the presence of a proton gradient across the membrane. In Listeria monocytogenes serotype 4b (strain F2365), this protein is ATP synthase epsilon chain.